A 60-amino-acid polypeptide reads, in one-letter code: Metallothionein A (60 aa).

Residues 1–28 form a beta region; that stretch reads MDPCECSKSGTCNCGGSCTCTNCSCKSC. The a divalent metal cation site is built by Cys-4, Cys-6, Cys-12, Cys-14, Cys-18, Cys-20, Cys-23, Cys-25, Cys-28, Cys-32, Cys-33, Cys-35, Cys-36, Cys-40, Cys-43, Cys-47, Cys-49, Cys-54, Cys-58, and Cys-59. The segment at 29–60 is alpha; sequence KKSCCPCCPSGCTKCASGCVCKGKTCDTSCCQ.

Belongs to the metallothionein superfamily. Type 1 family.

Its function is as follows. Metallothioneins have a high content of cysteine residues that bind various heavy metals. The chain is Metallothionein A (mta) from Chionodraco rastrospinosus (Ocellated icefish).